The following is a 144-amino-acid chain: Mannitol-specific phosphotransferase enzyme IIA component (144 aa).

The 140-residue stretch at 3–142 folds into the PTS EIIA type-2 domain; it reads ELFSNDNIFL…EEIKQVFEEA (140 aa). Catalysis depends on His63, which acts as the Tele-phosphohistidine intermediate. A Phosphohistidine; by HPr modification is found at His63.

As to quaternary structure, homodimer or homotrimer. Seems to be a monomer when not phosphorylated.

The protein localises to the cytoplasm. Functionally, the phosphoenolpyruvate-dependent sugar phosphotransferase system (sugar PTS), a major carbohydrate active transport system, catalyzes the phosphorylation of incoming sugar substrates concomitantly with their translocation across the cell membrane. The enzyme II CmtAB PTS system is involved in D-mannitol transport. The sequence is that of Mannitol-specific phosphotransferase enzyme IIA component (mtlF) from Staphylococcus aureus (strain COL).